The sequence spans 348 residues: Type II methyltransferase M.BglI (348 aa).

This sequence belongs to the N(4)/N(6)-methyltransferase family.

It catalyses the reaction a 2'-deoxycytidine in DNA + S-adenosyl-L-methionine = an N(4)-methyl-2'-deoxycytidine in DNA + S-adenosyl-L-homocysteine + H(+). In terms of biological role, a beta subtype methylase, recognizes the double-stranded sequence 5'-GCCNNNNNGGC-3', methylates C-2 on both strands, and protects the DNA from cleavage by the BglI endonuclease. The chain is Type II methyltransferase M.BglI (bglIM) from Bacillus subtilis.